A 735-amino-acid chain; its full sequence is Polyribonucleotide nucleotidyltransferase (735 aa).

2 residues coordinate Mg(2+): aspartate 515 and aspartate 521. The region spanning proline 581–isoleucine 641 is the KH domain. The interval asparagine 649–threonine 671 is disordered. The region spanning glycine 675–valine 734 is the S1 motif domain.

This sequence belongs to the polyribonucleotide nucleotidyltransferase family. Mg(2+) serves as cofactor.

Its subcellular location is the cytoplasm. The enzyme catalyses RNA(n+1) + phosphate = RNA(n) + a ribonucleoside 5'-diphosphate. Its function is as follows. Involved in mRNA degradation. Catalyzes the phosphorolysis of single-stranded polyribonucleotides processively in the 3'- to 5'-direction. The chain is Polyribonucleotide nucleotidyltransferase from Campylobacter curvus (strain 525.92).